The primary structure comprises 215 residues: Pyrrolidone-carboxylate peptidase (215 aa).

Active-site residues include E80, C143, and H167.

Belongs to the peptidase C15 family. As to quaternary structure, homotetramer.

It localises to the cytoplasm. The enzyme catalyses Release of an N-terminal pyroglutamyl group from a polypeptide, the second amino acid generally not being Pro.. Its function is as follows. Removes 5-oxoproline from various penultimate amino acid residues except L-proline. The chain is Pyrrolidone-carboxylate peptidase from Brevibacillus brevis (strain 47 / JCM 6285 / NBRC 100599).